A 337-amino-acid polypeptide reads, in one-letter code: tRNA N6-adenosine threonylcarbamoyltransferase (337 aa).

Residues His-111 and His-115 each coordinate Fe cation. Substrate is bound by residues 134-138 (LVSGG), Asp-167, Gly-180, and Asn-272. Asp-300 contacts Fe cation.

The protein belongs to the KAE1 / TsaD family. Fe(2+) is required as a cofactor.

It localises to the cytoplasm. It catalyses the reaction L-threonylcarbamoyladenylate + adenosine(37) in tRNA = N(6)-L-threonylcarbamoyladenosine(37) in tRNA + AMP + H(+). In terms of biological role, required for the formation of a threonylcarbamoyl group on adenosine at position 37 (t(6)A37) in tRNAs that read codons beginning with adenine. Is involved in the transfer of the threonylcarbamoyl moiety of threonylcarbamoyl-AMP (TC-AMP) to the N6 group of A37, together with TsaE and TsaB. TsaD likely plays a direct catalytic role in this reaction. The chain is tRNA N6-adenosine threonylcarbamoyltransferase from Erwinia tasmaniensis (strain DSM 17950 / CFBP 7177 / CIP 109463 / NCPPB 4357 / Et1/99).